A 291-amino-acid chain; its full sequence is uncharacterized protein (291 aa).

The protein belongs to the PhyH family.

This is an uncharacterized protein from Mycobacterium bovis (strain ATCC BAA-935 / AF2122/97).